Reading from the N-terminus, the 214-residue chain is External core antigen (214 aa).

An N-terminal signal peptide occupies residues 1 to 19 (MQLFHLCLIISCTCPTIQA). Residues 25 to 27 (GWL) form an HBEAG region. Positions 165 to 214 (NAPILSTLPETTVVRRRDRGRSPRRRTPSPRRRRSQSPRRRRSQSRESQC) are disordered. Residues 178-207 (VRRRDRGRSPRRRTPSPRRRRSQSPRRRRS) show a composition bias toward basic residues. Residues 186 to 192 (SPRRRTP) form a 1; half-length repeat. The segment at 186–208 (SPRRRTPSPRRRRSQSPRRRRSQ) is 3 X 8 AA repeats of S-P-R-R-R-R-S-Q. A propeptide spanning residues 186 to 214 (SPRRRTPSPRRRRSQSPRRRRSQSRESQC) is cleaved from the precursor. 2 tandem repeats follow at residues 193–200 (SPRRRRSQ) and 201–208 (SPRRRRSQ).

This sequence belongs to the orthohepadnavirus precore antigen family. In terms of assembly, homodimerizes. Post-translationally, phosphorylated. Cleaved by host furin.

It is found in the secreted. Its subcellular location is the host nucleus. In terms of biological role, may regulate immune response to the intracellular capsid in acting as a T-cell tolerogen, by having an immunoregulatory effect which prevents destruction of infected cells by cytotoxic T-cells. This immune regulation may predispose to chronicity during perinatal infections and prevent severe liver injury during adult infections. This Homo sapiens (Human) protein is External core antigen.